We begin with the raw amino-acid sequence, 226 residues long: Phosphoribosylformylglycinamidine synthase subunit PurQ (226 aa).

In terms of domain architecture, Glutamine amidotransferase type-1 spans 2 to 226; sequence KIAVIVFPGS…LENGTVIAEG (225 aa). The active-site Nucleophile is Cys86. Catalysis depends on residues His195 and Glu197.

As to quaternary structure, part of the FGAM synthase complex composed of 1 PurL, 1 PurQ and 2 PurS subunits.

The protein localises to the cytoplasm. The enzyme catalyses N(2)-formyl-N(1)-(5-phospho-beta-D-ribosyl)glycinamide + L-glutamine + ATP + H2O = 2-formamido-N(1)-(5-O-phospho-beta-D-ribosyl)acetamidine + L-glutamate + ADP + phosphate + H(+). The catalysed reaction is L-glutamine + H2O = L-glutamate + NH4(+). The protein operates within purine metabolism; IMP biosynthesis via de novo pathway; 5-amino-1-(5-phospho-D-ribosyl)imidazole from N(2)-formyl-N(1)-(5-phospho-D-ribosyl)glycinamide: step 1/2. In terms of biological role, part of the phosphoribosylformylglycinamidine synthase complex involved in the purines biosynthetic pathway. Catalyzes the ATP-dependent conversion of formylglycinamide ribonucleotide (FGAR) and glutamine to yield formylglycinamidine ribonucleotide (FGAM) and glutamate. The FGAM synthase complex is composed of three subunits. PurQ produces an ammonia molecule by converting glutamine to glutamate. PurL transfers the ammonia molecule to FGAR to form FGAM in an ATP-dependent manner. PurS interacts with PurQ and PurL and is thought to assist in the transfer of the ammonia molecule from PurQ to PurL. In Limosilactobacillus fermentum (strain NBRC 3956 / LMG 18251) (Lactobacillus fermentum), this protein is Phosphoribosylformylglycinamidine synthase subunit PurQ.